The primary structure comprises 142 residues: Large ribosomal subunit protein uL11 (142 aa).

It belongs to the universal ribosomal protein uL11 family. In terms of assembly, part of the ribosomal stalk of the 50S ribosomal subunit. Interacts with L10 and the large rRNA to form the base of the stalk. L10 forms an elongated spine to which L12 dimers bind in a sequential fashion forming a multimeric L10(L12)X complex. In terms of processing, one or more lysine residues are methylated.

In terms of biological role, forms part of the ribosomal stalk which helps the ribosome interact with GTP-bound translation factors. This is Large ribosomal subunit protein uL11 from Mycobacterium tuberculosis (strain ATCC 25177 / H37Ra).